We begin with the raw amino-acid sequence, 60 residues long: Large ribosomal subunit protein bL33 (60 aa).

Belongs to the bacterial ribosomal protein bL33 family.

The chain is Large ribosomal subunit protein bL33 from Chlorobium chlorochromatii (strain CaD3).